The chain runs to 472 residues: MTSDFKVIIVGGSVAGLSLAHCLEKIGVSFVVLEKGNQIAPQLGASIGILPNGGRILDQLGIFHSIEDEIEPLESAMMRYPDGFSFKSQYPQALHTSFGYPVAFLERQRFLQILYDKLKSKDCVFTNKRVVSIASGQDKVTAKTSDGAKYLADIVIGADGVHSIVRSEIWRHLKENSQISVLEAPNASIKHDYSCIYGISLNVPQIILGIQLNCLDDGVSIHLFTGKQSKLFWFVIIKTPQASFAKVEIDNTHTARCICEGLRTKKVSDTLCFEDVWSRCTIFKMTPLEEGVFKHWNYGRLACIGDAIRKMAPNNGQGANMAIEDACSLANILQKKISHGSIRDQDINSMFQEFSMAQRARTESVCAQSEFLVRMHANQGIGRRLLGRYLIPFLYDAPAGLSGFSISGATRIEFIDLPTRSLRGAWGKSWRGSWEFILQSLVYLRPKFRIVYALYLVAAAAFILYCLSSLFP.

The chain crosses the membrane as a helical span at residues 7–27 (VIIVGGSVAGLSLAHCLEKIG). 3 residues coordinate FAD: glutamate 34, glycine 48, and arginine 107. Residue asparagine 186 is glycosylated (N-linked (GlcNAc...) asparagine). Aspartate 306 and alanine 319 together coordinate FAD. Residues 450–470 (IVYALYLVAAAAFILYCLSSL) traverse the membrane as a helical segment.

The protein belongs to the paxM FAD-dependent monooxygenase family. FAD is required as a cofactor.

It is found in the membrane. It participates in secondary metabolite biosynthesis. In terms of biological role, FAD-dependent monooxygenase; part of the gene cluster that mediates the biosynthesis of lolitrems, indole-diterpene mycotoxins that are potent tremorgens in mammals, and are synthesized by clavicipitaceous fungal endophytes in association with their grass hosts. The geranylgeranyl diphosphate (GGPP) synthase ltmG is proposed to catalyze the first step in lolitrem biosynthesis. LtmG catalyzes a series of iterative condensations of isopentenyl diphosphate (IPP) with dimethylallyl diphosphate (DMAPP), geranyl diphosphate (GPP), and farnesyl diphosphate (FPP), to form GGPP. GGPP then condenses with indole-3-glycerol phosphate to form 3-geranylgeranylindole, an acyclic intermediate, to be incorporated into paxilline. Either ltmG or ltmC could be responsible for this step, as both are putative prenyl transferases. The FAD-dependent monooxygenase ltmM then catalyzes the epoxidation of the two terminal alkenes of the geranylgeranyl moiety, which is subsequently cyclized by ltmC, to paspaline. The cytochrome P450 monooxygenases ltmQ and ltmP can sequentially oxidize paspaline to terpendole E and terpendole F. Alternatively, ltmP converts paspaline to an intermediate which is oxidized by ltmQ to terpendole F. LtmF, ltmK, ltmE and ltmJ appear to be unique to the epichloe endophytes. The prenyltransferase ltmF is involved in the 27-hydroxyl-O-prenylation. The cytochrome P450 monooxygenase ltmK is required for the oxidative acetal ring formation. The multi-functional prenyltransferase ltmE is required for C20- and C21-prenylations of the indole ring of paspalanes and acts together with the cytochrome P450 monooxygenase ltmJ to yield lolitremanes by multiple oxidations and ring closures. The stereoisomer pairs of lolitriol and lolitrem N or lolitrem B and lolitrem F may be attributed to variations in the way in which ring closure can occur under the action of ltmJ. While the major product of this pathway is lolitrem B, the prenyl transferases and cytochrome P450 monooxygenases identified in this pathway have a remarkable versatility in their regio- and stereo-specificities to generate a diverse range of metabolites that are products of a metabolic grid rather than a linear pathway. The sequence is that of FAD-dependent monooxygenase ltmM (ltmM) from Epichloe festucae (strain Fl1).